We begin with the raw amino-acid sequence, 324 residues long: AT-hook motif nuclear-localized protein 24 (324 aa).

The segment covering 1–12 (MDPVQSHGSQSS) has biased composition (polar residues). Disordered stretches follow at residues 1–122 (MDPV…KPPI) and 262–324 (MQTP…RPPY). The span at 24 to 33 (LHLQQQQQEF) shows a compositional bias: low complexity. The span at 69–79 (NIDNIANNSGS) shows a compositional bias: polar residues. A compositionally biased stretch (gly residues) spans 88 to 99 (GGSGEGGGGSGG). The segment at residues 105-117 (RRPRGRPAGSKNK) is a DNA-binding region (a.T hook). Residues 129–268 (ANALRTHVME…EDEMQTPVHG (140 aa)) enclose the PPC domain. Over residues 280–297 (MMGQQLQHQQQAMSGHQG) the composition is skewed to low complexity. The span at 304 to 318 (GSVQLQQQHDQSYWS) shows a compositional bias: polar residues.

Its subcellular location is the nucleus. In terms of biological role, transcription factor that specifically binds AT-rich DNA sequences related to the nuclear matrix attachment regions (MARs). The chain is AT-hook motif nuclear-localized protein 24 from Arabidopsis thaliana (Mouse-ear cress).